Here is a 180-residue protein sequence, read N- to C-terminus: ATP synthase subunit delta (180 aa).

This sequence belongs to the ATPase delta chain family. In terms of assembly, F-type ATPases have 2 components, F(1) - the catalytic core - and F(0) - the membrane proton channel. F(1) has five subunits: alpha(3), beta(3), gamma(1), delta(1), epsilon(1). CF(0) has four main subunits: a(1), b(1), b'(1) and c(10-14). The alpha and beta chains form an alternating ring which encloses part of the gamma chain. F(1) is attached to F(0) by a central stalk formed by the gamma and epsilon chains, while a peripheral stalk is formed by the delta, b and b' chains.

It is found in the cellular thylakoid membrane. Functionally, f(1)F(0) ATP synthase produces ATP from ADP in the presence of a proton or sodium gradient. F-type ATPases consist of two structural domains, F(1) containing the extramembraneous catalytic core and F(0) containing the membrane proton channel, linked together by a central stalk and a peripheral stalk. During catalysis, ATP synthesis in the catalytic domain of F(1) is coupled via a rotary mechanism of the central stalk subunits to proton translocation. In terms of biological role, this protein is part of the stalk that links CF(0) to CF(1). It either transmits conformational changes from CF(0) to CF(1) or is implicated in proton conduction. This is ATP synthase subunit delta from Prochlorococcus marinus (strain MIT 9312).